Consider the following 205-residue polypeptide: Ribonuclease HII (205 aa).

An RNase H type-2 domain is found at 22–205; it reads RFICGVDEAG…RKSFLKNILR (184 aa). A divalent metal cation is bound by residues D28, E29, and D120.

It belongs to the RNase HII family. Mn(2+) is required as a cofactor. The cofactor is Mg(2+).

Its subcellular location is the cytoplasm. The catalysed reaction is Endonucleolytic cleavage to 5'-phosphomonoester.. Functionally, endonuclease that specifically degrades the RNA of RNA-DNA hybrids. This is Ribonuclease HII from Caldicellulosiruptor saccharolyticus (strain ATCC 43494 / DSM 8903 / Tp8T 6331).